The primary structure comprises 1345 residues: Mediator of RNA polymerase II transcription subunit 13 (1345 aa).

Disordered regions lie at residues lysine 363–proline 387 and phenylalanine 402–glycine 537. The segment covering serine 364–serine 375 has biased composition (low complexity). A compositionally biased stretch (polar residues) spans proline 406–leucine 415. The segment covering leucine 469–leucine 482 has biased composition (acidic residues). A compositionally biased stretch (polar residues) spans serine 486–glycine 501.

The protein belongs to the Mediator complex subunit 13 family. As to quaternary structure, component of the SRB8-11 complex, which itself associates with the Mediator complex.

The protein localises to the nucleus. In terms of biological role, component of the SRB8-11 complex. The SRB8-11 complex is a regulatory module of the Mediator complex which is itself involved in regulation of basal and activated RNA polymerase II-dependent transcription. The SRB8-11 complex may be involved in the transcriptional repression of a subset of genes regulated by Mediator. It may inhibit the association of the Mediator complex with RNA polymerase II to form the holoenzyme complex. In Candida glabrata (strain ATCC 2001 / BCRC 20586 / JCM 3761 / NBRC 0622 / NRRL Y-65 / CBS 138) (Yeast), this protein is Mediator of RNA polymerase II transcription subunit 13 (SSN2).